The following is a 218-amino-acid chain: Small ribosomal subunit protein uS3c (218 aa).

One can recognise a KH type-2 domain in the interval Val47 to Gly118.

Belongs to the universal ribosomal protein uS3 family. In terms of assembly, part of the 30S ribosomal subunit.

It localises to the plastid. It is found in the chloroplast. In Cucumis sativus (Cucumber), this protein is Small ribosomal subunit protein uS3c (rps3).